Here is an 894-residue protein sequence, read N- to C-terminus: Phosphinomethylmalate isomerase (894 aa).

[4Fe-4S] cluster is bound by residues Cys438, Cys504, and Cys507.

The protein belongs to the aconitase/IPM isomerase family. The cofactor is [4Fe-4S] cluster.

The enzyme catalyses phosphinomethylmalate = phosphinomethylisomalate. It carries out the reaction phosphinomethylmalate = 2-(phosphinatomethylidene)butanedioate + H2O. The catalysed reaction is 2-(phosphinatomethylidene)butanedioate + H2O = phosphinomethylisomalate. It participates in secondary metabolite biosynthesis; bialaphos biosynthesis. In terms of biological role, isomerase involved in the biosynthesis of phosphinothricin tripeptide (PTT), also known as bialaphos (BA), a natural-product antibiotic and potent herbicide. Probably catalyzes the isomerization of phosphinomethylmalate to phosphinomethylisomalate. Shows no standard aconitase activity with citrate as a substrate and is not able to complement an acnA mutant. The sequence is that of Phosphinomethylmalate isomerase from Streptomyces viridochromogenes (strain DSM 40736 / JCM 4977 / BCRC 1201 / Tue 494).